A 788-amino-acid chain; its full sequence is Protein translocase subunit SecA 2 (788 aa).

Residues Q86, 104 to 108 (GEGKT), and D493 each bind ATP.

This sequence belongs to the SecA family. As to quaternary structure, monomer and homodimer. Part of the essential Sec protein translocation apparatus which comprises SecA, SecYEG and auxiliary proteins SecDF. Other proteins may also be involved.

It is found in the cell membrane. Its subcellular location is the cytoplasm. The catalysed reaction is ATP + H2O + cellular proteinSide 1 = ADP + phosphate + cellular proteinSide 2.. Functionally, part of the Sec protein translocase complex. Interacts with the SecYEG preprotein conducting channel. Has a central role in coupling the hydrolysis of ATP to the transfer of proteins into and across the cell membrane, serving as an ATP-driven molecular motor driving the stepwise translocation of polypeptide chains across the membrane. This Bacillus anthracis protein is Protein translocase subunit SecA 2.